The primary structure comprises 301 residues: Phosphatidylglycerol--prolipoprotein diacylglyceryl transferase (301 aa).

A run of 4 helical transmembrane segments spans residues 10-30, 57-77, 92-112, and 119-139; these read IAFSLGPVKVHWYGLMYLASF, LLFYAMMGVVLGGRVGYMLFY, VWEGGMSFHGGLIGVLLAVAW, and LQMFDVLDFGAPLVPVGLGFG. A 1,2-diacyl-sn-glycero-3-phospho-(1'-sn-glycerol) is bound at residue arginine 140. A run of 3 helical transmembrane segments spans residues 202-222, 230-250, and 264-284; these read PSQLYEAFLEGLVMFIVLWLF, YAVSGLFALLYGVFRFLVEFV, and LTRGQILSLPLIVIGLFLFWL.

This sequence belongs to the Lgt family.

The protein localises to the cell inner membrane. The enzyme catalyses L-cysteinyl-[prolipoprotein] + a 1,2-diacyl-sn-glycero-3-phospho-(1'-sn-glycerol) = an S-1,2-diacyl-sn-glyceryl-L-cysteinyl-[prolipoprotein] + sn-glycerol 1-phosphate + H(+). It functions in the pathway protein modification; lipoprotein biosynthesis (diacylglyceryl transfer). Catalyzes the transfer of the diacylglyceryl group from phosphatidylglycerol to the sulfhydryl group of the N-terminal cysteine of a prolipoprotein, the first step in the formation of mature lipoproteins. This chain is Phosphatidylglycerol--prolipoprotein diacylglyceryl transferase, found in Xylella fastidiosa (strain 9a5c).